We begin with the raw amino-acid sequence, 207 residues long: MASLSGPISPTSLEMFKPGVEEFNPSKLLLLSNHQEGLLYPTILGSLELLSFKRERSLNLQRDKVCLLHQESHLLKLRGTGTDTTDVLLKQPTAISVNCCHDGTFTTWEQDRMPKTSTAPTLTESSGSLVTRLILIPRLTLSIGIQVAMRLFRLGFRLARYSLKVTILKAQEGLLLIPDLLRVHPIEPLVQDRVVEPILAIEPLPLV.

It belongs to the coronavirus I protein family.

It is found in the virion. Functionally, structural protein that is not essential for the viral replication either in tissue culture or in its natural host. In Sus scrofa (Pig), this protein is Protein I (N).